The sequence spans 100 residues: Urease subunit gamma (100 aa).

Belongs to the urease gamma subunit family. As to quaternary structure, heterotrimer of UreA (gamma), UreB (beta) and UreC (alpha) subunits. Three heterotrimers associate to form the active enzyme.

It localises to the cytoplasm. It carries out the reaction urea + 2 H2O + H(+) = hydrogencarbonate + 2 NH4(+). The protein operates within nitrogen metabolism; urea degradation; CO(2) and NH(3) from urea (urease route): step 1/1. This is Urease subunit gamma from Marinomonas sp. (strain MWYL1).